The primary structure comprises 704 residues: Tryptophan synthase (704 aa).

The tryptophan synthase alpha chain stretch occupies residues methionine 1 to lysine 292. Active-site proton acceptor residues include glutamate 49 and aspartate 60. The segment at glycine 293–lysine 704 is tryptophan synthase beta chain. Lysine 380 is modified (N6-(pyridoxal phosphate)lysine).

In the N-terminal section; belongs to the TrpA family. The protein in the C-terminal section; belongs to the TrpB family. It depends on pyridoxal 5'-phosphate as a cofactor.

The catalysed reaction is (1S,2R)-1-C-(indol-3-yl)glycerol 3-phosphate + L-serine = D-glyceraldehyde 3-phosphate + L-tryptophan + H2O. It participates in amino-acid biosynthesis; L-tryptophan biosynthesis; L-tryptophan from chorismate: step 5/5. This is Tryptophan synthase (TRP-1) from Coprinopsis cinerea (strain Okayama-7 / 130 / ATCC MYA-4618 / FGSC 9003) (Inky cap fungus).